We begin with the raw amino-acid sequence, 188 residues long: dCTP deaminase (188 aa).

DCTP contacts are provided by residues 111–116 (KSTYAR), 135–137 (TLE), Gln-156, Tyr-170, and Gln-180. Glu-137 functions as the Proton donor/acceptor in the catalytic mechanism.

Belongs to the dCTP deaminase family. Homotrimer.

It carries out the reaction dCTP + H2O + H(+) = dUTP + NH4(+). It participates in pyrimidine metabolism; dUMP biosynthesis; dUMP from dCTP (dUTP route): step 1/2. Its function is as follows. Catalyzes the deamination of dCTP to dUTP. This is dCTP deaminase from Cupriavidus pinatubonensis (strain JMP 134 / LMG 1197) (Cupriavidus necator (strain JMP 134)).